A 123-amino-acid chain; its full sequence is Immunoglobulin lambda variable 5-37 (123 aa).

The signal sequence occupies residues 1–19 (MAWTPLLLLLLSHCTGSLS). The framework-1 stretch occupies residues 20–44 (QPVLTQPPSSSASPGESARLTCTLP). The 103-residue stretch at 21 to 123 (PVLTQPPSSS…YCMIWPSNAS (103 aa)) folds into the Ig-like domain. Cysteines 41 and 115 form a disulfide. Positions 45-53 (SDINVGSYN) are complementarity-determining-1. The segment at 54–70 (IYWYQQKPGSPPRYLLY) is framework-2. The tract at residues 71–77 (YYSDSDK) is complementarity-determining-2. Residues 78–115 (GQGSGVPSRFSGSKDASANTGILLISGLQSEDEADYYC) are framework-3. The segment at 116–123 (MIWPSNAS) is complementarity-determining-3.

Immunoglobulins are composed of two identical heavy chains and two identical light chains; disulfide-linked.

The protein resides in the secreted. It localises to the cell membrane. Functionally, v region of the variable domain of immunoglobulin light chains that participates in the antigen recognition. Immunoglobulins, also known as antibodies, are membrane-bound or secreted glycoproteins produced by B lymphocytes. In the recognition phase of humoral immunity, the membrane-bound immunoglobulins serve as receptors which, upon binding of a specific antigen, trigger the clonal expansion and differentiation of B lymphocytes into immunoglobulins-secreting plasma cells. Secreted immunoglobulins mediate the effector phase of humoral immunity, which results in the elimination of bound antigens. The antigen binding site is formed by the variable domain of one heavy chain, together with that of its associated light chain. Thus, each immunoglobulin has two antigen binding sites with remarkable affinity for a particular antigen. The variable domains are assembled by a process called V-(D)-J rearrangement and can then be subjected to somatic hypermutations which, after exposure to antigen and selection, allow affinity maturation for a particular antigen. This is Immunoglobulin lambda variable 5-37 from Homo sapiens (Human).